Reading from the N-terminus, the 530-residue chain is Probable cytochrome P450 519A1 (530 aa).

Residues 1-21 (MESIINLIFYIIIFLILIDFL) form a helical membrane-spanning segment. Cys-476 contacts heme.

The protein belongs to the cytochrome P450 family. It depends on heme as a cofactor.

It localises to the membrane. The sequence is that of Probable cytochrome P450 519A1 (cyp519A1) from Dictyostelium discoideum (Social amoeba).